Here is a 369-residue protein sequence, read N- to C-terminus: Methylthioribose-1-phosphate isomerase (369 aa).

Residue Met1 is modified to N-acetylmethionine. Position 158 is an omega-N-methylarginine (Arg158). Asp248 serves as the catalytic Proton donor. Position 366 is a phosphoserine (Ser366).

It belongs to the eIF-2B alpha/beta/delta subunits family. MtnA subfamily.

Its subcellular location is the cytoplasm. It is found in the nucleus. The catalysed reaction is 5-(methylsulfanyl)-alpha-D-ribose 1-phosphate = 5-(methylsulfanyl)-D-ribulose 1-phosphate. The protein operates within amino-acid biosynthesis; L-methionine biosynthesis via salvage pathway; L-methionine from S-methyl-5-thio-alpha-D-ribose 1-phosphate: step 1/6. Functionally, catalyzes the interconversion of methylthioribose-1-phosphate (MTR-1-P) into methylthioribulose-1-phosphate (MTRu-1-P). This Rattus norvegicus (Rat) protein is Methylthioribose-1-phosphate isomerase (Mri1).